The sequence spans 72 residues: Translation initiation factor IF-1 (72 aa).

The S1-like domain maps to 1–72 (MAKDDVIEVE…TRGRITYRFK (72 aa)).

The protein belongs to the IF-1 family. As to quaternary structure, component of the 30S ribosomal translation pre-initiation complex which assembles on the 30S ribosome in the order IF-2 and IF-3, IF-1 and N-formylmethionyl-tRNA(fMet); mRNA recruitment can occur at any time during PIC assembly.

It is found in the cytoplasm. In terms of biological role, one of the essential components for the initiation of protein synthesis. Stabilizes the binding of IF-2 and IF-3 on the 30S subunit to which N-formylmethionyl-tRNA(fMet) subsequently binds. Helps modulate mRNA selection, yielding the 30S pre-initiation complex (PIC). Upon addition of the 50S ribosomal subunit IF-1, IF-2 and IF-3 are released leaving the mature 70S translation initiation complex. The protein is Translation initiation factor IF-1 of Streptococcus gordonii (strain Challis / ATCC 35105 / BCRC 15272 / CH1 / DL1 / V288).